The primary structure comprises 605 residues: MLVVFPYQGSSIILESGNVNDYEVVYPQKVPSLPKGGVQNPQPETKYEDTMQYEFHVNGEPVVPHLEKNKGLFSEDYTETHYASDGREITTSPSVQDHCYYYGYIQNEADSSAAISACDGLKGHFKHQGETYFIEPLKLSNSEAHAIYKDENVEEEDETPKICGLTQTTWESDEPFKNTSLLIYTPEQNRYLQAKKYIEFYVAVDNRMYRHYKRNKTVIKRRVYELVNILNTIFRRLNFYIALIGLEIWSKRDKVNVQSDVKVTLKSFGKWREKKVAATQKEYNAQLLTRIDFNGNTVGLAALGALCSVKYSVAVIQDYSKRTSMVASTMAHEMGHNLGINHDRASCTSCGSNKCIMSTKRTKPAYRFSSCSVREHRRYLLRDRPQCILNKPLITDIVAPAICGNYFVEVGEECDCGSPRDCQSACCNAATCKLKHGAQCDSGECCRKCKFKKAGAKCRAVKDDCDLPERCTGRSAECPTDIFRRNGLPCQNNQGYCYNGKCPTLTNQCIAFMGPNVKVSRDSCFTLNQRGKGCGYCRMQNGAKFPCAAKDIKCGKLFCKKRNSKICNCLISPDDPNYGMVEPGTKCGDGVVCSNRKCVKLQRVY.

The signal sequence occupies residues methionine 1 to serine 11. Residues isoleucine 12–threonine 179 constitute a propeptide that is removed on maturation. N-linked (GlcNAc...) asparagine glycosylation is found at asparagine 178 and asparagine 215. One can recognise a Peptidase M12B domain in the interval lysine 196–proline 392. 17 cysteine pairs are disulfide-bonded: cysteine 307–cysteine 387, cysteine 347–cysteine 371, cysteine 350–cysteine 355, cysteine 403–cysteine 432, cysteine 414–cysteine 427, cysteine 416–cysteine 422, cysteine 426–cysteine 449, cysteine 440–cysteine 446, cysteine 445–cysteine 471, cysteine 458–cysteine 478, cysteine 465–cysteine 497, cysteine 490–cysteine 502, cysteine 509–cysteine 559, cysteine 524–cysteine 567, cysteine 537–cysteine 547, cysteine 554–cysteine 593, and cysteine 587–cysteine 598. A Zn(2+)-binding site is contributed by histidine 332. The active site involves glutamate 333. Zn(2+)-binding residues include histidine 336 and histidine 342. Residues proline 400–asparagine 486 enclose the Disintegrin domain. The short motif at aspartate 464–aspartate 466 is the D/ECD-tripeptide element.

It belongs to the venom metalloproteinase (M12B) family. P-III subfamily. P-IIIa sub-subfamily. Monomer. Requires Zn(2+) as cofactor. In terms of tissue distribution, expressed by the venom gland.

It is found in the secreted. Functionally, snake venom zinc metalloproteinase that inhibits platelet aggregation and degrades fibrinogen. The protein is Zinc metalloproteinase-disintegrin-like BfMP of Bungarus fasciatus (Banded krait).